The primary structure comprises 305 residues: MGCKTSKMCCPQLRKKKRQKAHQGGLTSQELNDLNAKTQGPNEVLQKIKEYEQEIRDLLQKHQEEKTALADAHKADVEARTLELQAQAQKDRDAETAKLLSEQAATMKAEMEEKFAELQKSFEQEKVSLTQTHQQFTDALQETVDELNSQLASFREKMKRVEESVLRQDYRRHIQDHGSPGQFWEQELQSLHFVIEMKSELIREQDKRLRNHESTMERNLVLEERSRTLQQENEALKVQTQKQGAVTVRLSEELLSTQVSLEKQIHRCEQLQREKEQNLYRAVNGDAPQQFSLQSNAQELPVMVL.

A lipid anchor (N-myristoyl glycine) is attached at glycine 2. Residues 13 to 38 (LRKKKRQKAHQGGLTSQELNDLNAKT) form a disordered region. Polar residues predominate over residues 25-38 (GLTSQELNDLNAKT). Positions 42–281 (NEVLQKIKEY…QREKEQNLYR (240 aa)) form a coiled coil.

The protein belongs to the CCDC69 family.

The protein localises to the cytoplasm. Its subcellular location is the cytoskeleton. It localises to the spindle. It is found in the midbody. Functionally, may act as a scaffold to regulate the recruitment and assembly of spindle midzone components. The protein is Coiled-coil domain-containing protein 69-A (ccdc69-a) of Xenopus laevis (African clawed frog).